The following is a 167-amino-acid chain: Zymogen granule membrane protein 16 (167 aa).

The first 16 residues, 1–16 (MLAIALLVLLCASASA), serve as a signal peptide directing secretion. Positions 24 to 159 (SSYSGEYGGK…IDAISLHWDT (136 aa)) constitute a Jacalin-type lectin domain.

Belongs to the jacalin lectin family. In terms of tissue distribution, expressed in pancreas, colon, duodenum, and much less in stomach.

It localises to the secreted. The protein localises to the extracellular space. It is found in the extracellular matrix. Its subcellular location is the zymogen granule lumen. The protein resides in the golgi apparatus lumen. In terms of biological role, may play a role in protein trafficking. May act as a linker molecule between the submembranous matrix on the luminal side of zymogen granule membrane (ZGM) and aggregated secretory proteins during granule formation in the TGN. This is Zymogen granule membrane protein 16 (Zg16) from Rattus norvegicus (Rat).